Consider the following 525-residue polypeptide: GMP synthase [glutamine-hydrolyzing] (525 aa).

The Glutamine amidotransferase type-1 domain occupies 9–207 (RILILDFGSQ…VLDICRCTPL (199 aa)). The Nucleophile role is filled by cysteine 86. Catalysis depends on residues histidine 181 and glutamate 183. The GMPS ATP-PPase domain occupies 208–400 (WTPAKIIEDA…LGLPYDMLYR (193 aa)). An ATP-binding site is contributed by 235–241 (SGGVDSS).

In terms of assembly, homodimer.

The catalysed reaction is XMP + L-glutamine + ATP + H2O = GMP + L-glutamate + AMP + diphosphate + 2 H(+). Its pathway is purine metabolism; GMP biosynthesis; GMP from XMP (L-Gln route): step 1/1. Catalyzes the synthesis of GMP from XMP. This chain is GMP synthase [glutamine-hydrolyzing], found in Sodalis glossinidius (strain morsitans).